Reading from the N-terminus, the 67-residue chain is ATP synthase F(0) complex subunit 8 (67 aa).

Residues 8–24 form a helical membrane-spanning segment; that stretch reads TWFTVILSMIISLFMLL. At Lys54 the chain carries N6-acetyllysine; alternate. Lys54 carries the post-translational modification N6-succinyllysine; alternate. Position 57 is an N6-acetyllysine (Lys57).

This sequence belongs to the ATPase protein 8 family. Component of the ATP synthase complex composed at least of ATP5F1A/subunit alpha, ATP5F1B/subunit beta, ATP5MC1/subunit c (homooctomer), MT-ATP6/subunit a, MT-ATP8/subunit 8, ATP5ME/subunit e, ATP5MF/subunit f, ATP5MG/subunit g, ATP5MK/subunit k, ATP5MJ/subunit j, ATP5F1C/subunit gamma, ATP5F1D/subunit delta, ATP5F1E/subunit epsilon, ATP5PF/subunit F6, ATP5PB/subunit b, ATP5PD/subunit d, ATP5PO/subunit OSCP. ATP synthase complex consists of a soluble F(1) head domain (subunits alpha(3) and beta(3)) - the catalytic core - and a membrane F(0) domain - the membrane proton channel (subunits c, a, 8, e, f, g, k and j). These two domains are linked by a central stalk (subunits gamma, delta, and epsilon) rotating inside the F1 region and a stationary peripheral stalk (subunits F6, b, d, and OSCP). Interacts with PRICKLE3.

It localises to the mitochondrion membrane. Its function is as follows. Subunit 8, of the mitochondrial membrane ATP synthase complex (F(1)F(0) ATP synthase or Complex V) that produces ATP from ADP in the presence of a proton gradient across the membrane which is generated by electron transport complexes of the respiratory chain. ATP synthase complex consist of a soluble F(1) head domain - the catalytic core - and a membrane F(1) domain - the membrane proton channel. These two domains are linked by a central stalk rotating inside the F(1) region and a stationary peripheral stalk. During catalysis, ATP synthesis in the catalytic domain of F(1) is coupled via a rotary mechanism of the central stalk subunits to proton translocation. In vivo, can only synthesize ATP although its ATP hydrolase activity can be activated artificially in vitro. Part of the complex F(0) domain. This chain is ATP synthase F(0) complex subunit 8, found in Cavia porcellus (Guinea pig).